We begin with the raw amino-acid sequence, 360 residues long: Phospho-N-acetylmuramoyl-pentapeptide-transferase (360 aa).

Transmembrane regions (helical) follow at residues 21–41 (YVTF…LWWG), 74–94 (MGGI…GDLG), 97–117 (YVWV…IDDY), 135–155 (ILQS…ADTV), 168–188 (IMPQ…VGSS), 199–219 (GLAI…AYLS), 236–256 (AGEL…FLWF), 263–283 (VFMG…IAVL), 288–308 (ILLV…ILQV), and 338–358 (VIVR…ATLK).

It belongs to the glycosyltransferase 4 family. MraY subfamily. It depends on Mg(2+) as a cofactor.

Its subcellular location is the cell inner membrane. The enzyme catalyses UDP-N-acetyl-alpha-D-muramoyl-L-alanyl-gamma-D-glutamyl-meso-2,6-diaminopimeloyl-D-alanyl-D-alanine + di-trans,octa-cis-undecaprenyl phosphate = di-trans,octa-cis-undecaprenyl diphospho-N-acetyl-alpha-D-muramoyl-L-alanyl-D-glutamyl-meso-2,6-diaminopimeloyl-D-alanyl-D-alanine + UMP. Its pathway is cell wall biogenesis; peptidoglycan biosynthesis. Catalyzes the initial step of the lipid cycle reactions in the biosynthesis of the cell wall peptidoglycan: transfers peptidoglycan precursor phospho-MurNAc-pentapeptide from UDP-MurNAc-pentapeptide onto the lipid carrier undecaprenyl phosphate, yielding undecaprenyl-pyrophosphoryl-MurNAc-pentapeptide, known as lipid I. The polypeptide is Phospho-N-acetylmuramoyl-pentapeptide-transferase (Shewanella violacea (strain JCM 10179 / CIP 106290 / LMG 19151 / DSS12)).